A 907-amino-acid chain; its full sequence is MFGKLLTKVFGSRNDRTLKAFGKVVNKINGFEEEYGQLSDEELKAKTKVFRERLEAGETLDDVLPEAFATVREASKRVFEMRHFDVQLIGGMILDSNRIAEMRTGEGKTLTATLPAYLNGLTGKGVHVITVNDYLAGRDAENNRPLFEFLGLSVGINVAGLGQVEKKAAYDADITYGTNNEFGFDYLRDNMAFSPAERVQRPLHYALIDEVDSILIDEARTPLIISGAAEDSSELYTKINTLIPNLIQQEKEDTEEEIGEGDYSIDEKAKQVHMTERGQEKVEVLLTERGMLAEGDSLYSAANISLLHHVNAALRAHTLFEKDVDYIVQDNEVIIVDEHTGRTMPGRRWSEGLHQAVEAKEGVHIQNENQTLASITFQNFFRQYEKLAGMTGTADTEAFEFQHIYGLDTVVVPTNRPMVRQDNPDLVYLTAEEKYAAIVKDIVGCRERGQPVLVGTVSIEQSELLHSLLKKEKIPHEILNAKFHEREADIVAQAGRTGAVTVATNMAGRGTDIVLGGNWNMEIEALANPTDEQRAKIKADWQIRHDEVVDAGGLHILGTERHESRRIDNQLRGRSGRQGDAGSSRFYLSMEDSLMRIFASDRVSSMMKKLGMEEGEAIEHPWVSRAIENAQRKVEARNFDIRKQLLEFDDVANDQRQVVYAQRNELMDAESIKDTITNIQTDVINELMDQYIPPQSVEELWDVAGLEQRLQQEYTMVLPIQEWLDKEDDLHEETLRERIVDTWINAYKAKEEMVGEQVLRQFEKAVMLQTLDGLWKEHLSAMDHLRQGIHLRGYAQKNPKQEYKRESFELFQQMLESLKHDVISILSKVQVQAQSDVEEMEERRRQEDAKIRRDYQHAAAEAIVGAEESAALAATQPQVREGEKVGRNDPCPCGSGKKYKQCHGKLS.

ATP contacts are provided by residues Gln-87, 105–109, and Asp-512; that span reads GEGKT. The segment at 870–897 is disordered; the sequence is AALAATQPQVREGEKVGRNDPCPCGSGK. Residues Cys-891, Cys-893, Cys-902, and His-903 each coordinate Zn(2+).

The protein belongs to the SecA family. In terms of assembly, monomer and homodimer. Part of the essential Sec protein translocation apparatus which comprises SecA, SecYEG and auxiliary proteins SecDF-YajC and YidC. The cofactor is Zn(2+).

The protein localises to the cell inner membrane. It is found in the cytoplasm. The enzyme catalyses ATP + H2O + cellular proteinSide 1 = ADP + phosphate + cellular proteinSide 2.. In terms of biological role, part of the Sec protein translocase complex. Interacts with the SecYEG preprotein conducting channel. Has a central role in coupling the hydrolysis of ATP to the transfer of proteins into and across the cell membrane, serving both as a receptor for the preprotein-SecB complex and as an ATP-driven molecular motor driving the stepwise translocation of polypeptide chains across the membrane. The sequence is that of Protein translocase subunit SecA from Shewanella piezotolerans (strain WP3 / JCM 13877).